Consider the following 30-residue polypeptide: Kalata-B10 (30 aa).

The segment at residues 1-30 (GLPTCGETCFGGTCNTPGCSCSSWPICTRD) is a cross-link (cyclopeptide (Gly-Asp)). 3 disulfide bridges follow: cysteine 5/cysteine 19, cysteine 9/cysteine 21, and cysteine 14/cysteine 27.

Belongs to the cyclotide family. Moebius subfamily. Post-translationally, this peptide occurs in both cyclic and linear forms. The linear form contains unmodified Trp-24, the cyclic peptide occurs in two forms with unmodified Trp-24, and with Trp-24 oxidized to form oxindolylalanine. Oxidation is enhanced by exposure to sunlight.

Probably participates in a plant defense mechanism. This Oldenlandia affinis protein is Kalata-B10.